Consider the following 75-residue polypeptide: Small ribosomal subunit protein eS17 (75 aa).

It belongs to the eukaryotic ribosomal protein eS17 family.

This is Small ribosomal subunit protein eS17 from Thermoplasma volcanium (strain ATCC 51530 / DSM 4299 / JCM 9571 / NBRC 15438 / GSS1).